Here is a 261-residue protein sequence, read N- to C-terminus: Membrane protein insertase MisCA (261 aa).

The N-terminal stretch at 1–22 is a signal peptide; that stretch reads MLLKRRIGLLLSMVGVFMLLAG. Cys-23 is lipidated: N-palmitoyl cysteine. Cys-23 carries the S-diacylglycerol cysteine lipid modification. A run of 5 helical transmembrane segments spans residues 61 to 81, 131 to 151, 174 to 194, 204 to 224, and 225 to 245; these read YGLS…PLMI, LAGC…YHAI, YILP…MMAG, MMLW…PAAL, and SLYW…IKGP.

It belongs to the OXA1/ALB3/YidC family. Type 2 subfamily. As to quaternary structure, mostly monomeric, it may also form dimers. Interacts with SpoIIIAE. Forms a complex with the F(1)F(0) ATP synthase in which can be found the alpha, beta, gamma, delta and epsilon subunits of F(1) and a, b and subunits of F(0). YqgA is found in the same complex.

The protein localises to the cell membrane. Its function is as follows. Required for the insertion and/or proper folding and/or complex formation of integral membrane proteins into the membrane. Involved in integration of membrane proteins that insert both dependently and independently of the Sec translocase complex, as well as at least some lipoproteins. Also involved in protein secretion processes. Essential for sporulation by activating sigma factor SpoIIIG/SigG after engulfment is completed in the prespore, maybe by acting on SpoIIIAE. It has an overlapping, although partly distinct, function compared to YqjG(MisCB). The sequence is that of Membrane protein insertase MisCA (misCA) from Bacillus subtilis (strain 168).